The chain runs to 580 residues: Putative multidrug export ATP-binding/permease protein YgaD (580 aa).

Over 1–17 the chain is Cytoplasmic; sequence MGVMKRYMQFVKPYKKQ. A helical transmembrane segment spans residues 18 to 38; that stretch reads IFVTVLIGIVKFSIPLALPLL. In terms of domain architecture, ABC transmembrane type-1 spans 19 to 307; that stretch reads FVTVLIGIVK…LINSSTTLTQ (289 aa). Topologically, residues 39–57 are extracellular; that stretch reads LKYVVDDIIQGGGTASDKT. Residues 58–78 form a helical membrane-spanning segment; the sequence is TSLFTIMAIMFALFLILRPPV. Residues 79 to 135 are Cytoplasmic-facing; that stretch reads EYYRQYFAQWTASKVLYDIRAKLFDHIQKLSLRFYANTRTGEVISRVINDVEQTKDF. The helical transmembrane segment at 136–156 threads the bilayer; sequence VITGLMNIWLDMLTILIVISI. The Extracellular segment spans residues 157-163; it reads MLTLDVK. Residues 164–184 traverse the membrane as a helical segment; that stretch reads LTLISIVLFPLYGISVKYFYG. Residues 185–243 lie on the Cytoplasmic side of the membrane; sequence RLRKLTRERSQALAQVQGHLHERIQGMPVIRSFAIEDHEQAQFNEKNGHFLDKAIRHTN. The helical transmembrane segment at 244–263 threads the bilayer; that stretch reads WNAKTFAVVNTITDLAPLIV. Over 264 to 268 the chain is Extracellular; it reads IACAG. Residues 269–288 traverse the membrane as a helical segment; sequence YFVINGPLTVGTMVAFVGYI. Topologically, residues 289 to 580 are cytoplasmic; that stretch reads DRMYNPVRRL…KHLFTIQNLN (292 aa). One can recognise an ABC transporter domain in the interval 341 to 576; the sequence is VEFQNVSFQY…ESQYKHLFTI (236 aa). 375-382 is a binding site for ATP; sequence GMSGGGKS.

The protein belongs to the ABC transporter superfamily. Homodimer.

The protein localises to the cell membrane. Functionally, may be involved in multidrug export. Transmembrane domains (TMD) form a pore in the cell membrane and the ATP-binding domain (NBD) is responsible for energy generation. The polypeptide is Putative multidrug export ATP-binding/permease protein YgaD (ygaD) (Bacillus subtilis (strain 168)).